We begin with the raw amino-acid sequence, 559 residues long: Hepatocyte nuclear factor 1-alpha (559 aa).

The region spanning 13–44 (GPGRLSALQEQLIWALLGSGLSREVLVHALGE) is the HNF-p1 domain. Positions 14-43 (PGRLSALQEQLIWALLGSGLSREVLVHALG) are dimerization. Positions 49-62 (RVTPGAEKGDRGDG) are enriched in basic and acidic residues. The interval 49–73 (RVTPGAEKGDRGDGESSEEGEMDFP) is disordered. Residues 78 to 173 (QELEALAPEE…ISQQFTNARH (96 aa)) form the POU-specific atypical domain. 6 interaction with DNA regions span residues 121–123 (QRE), 134–140 (HLSQHLN), 146–149 (KNQK), 192–195 (RFKW), 252–254 (RVY), and 259–262 (NRRK). The short motif at 186–194 (RKGRRNRFK) is the Nuclear localization signal element. Residues 188–268 (GRRNRFKWGP…NRRKEEAFRH (81 aa)) constitute a DNA-binding region (homeobox; HNF1-type). The segment at 492–559 (TDPEEQTDQP…IPAQMVSTAQ (68 aa)) is disordered. The span at 499-522 (DQPIQEDSLHLQSPSPVPVSSGNL) shows a compositional bias: polar residues.

This sequence belongs to the HNF1 homeobox family. As to quaternary structure, binds DNA as a dimer. In terms of tissue distribution, expressed in liver, intestine, spleen and kidney.

Its subcellular location is the nucleus. In terms of biological role, transcriptional activator that regulates the tissue specific expression of multiple genes, especially in pancreas and liver. Binds to the promoter of the albumin gene. This chain is Hepatocyte nuclear factor 1-alpha (hnf1a), found in Salmo salar (Atlantic salmon).